Reading from the N-terminus, the 78-residue chain is Small ribosomal subunit protein bS18 (78 aa).

Belongs to the bacterial ribosomal protein bS18 family. Part of the 30S ribosomal subunit. Forms a tight heterodimer with protein bS6.

Its function is as follows. Binds as a heterodimer with protein bS6 to the central domain of the 16S rRNA, where it helps stabilize the platform of the 30S subunit. In Lacticaseibacillus casei (strain BL23) (Lactobacillus casei), this protein is Small ribosomal subunit protein bS18.